Consider the following 181-residue polypeptide: Translation initiation factor IF-3 (181 aa).

Belongs to the IF-3 family. In terms of assembly, monomer.

It is found in the cytoplasm. Functionally, IF-3 binds to the 30S ribosomal subunit and shifts the equilibrium between 70S ribosomes and their 50S and 30S subunits in favor of the free subunits, thus enhancing the availability of 30S subunits on which protein synthesis initiation begins. The sequence is that of Translation initiation factor IF-3 from Mycoplasma mycoides subsp. mycoides SC (strain CCUG 32753 / NCTC 10114 / PG1).